The chain runs to 251 residues: YlmG homolog protein 2, chloroplastic (251 aa).

A chloroplast-targeting transit peptide spans 1–51; that stretch reads MEASANEPAMKSLKSNPSGPIPNFFVSLSSAFTQTPLVRSNKPNLLLLPPV. 2 helical membrane-spanning segments follow: residues 119-139 and 183-203; these read GFAAVLPGDSVAGLVVANGLI and FIPPLGGLDLSPILAFLVLNA. Residues 232–243 show a composition bias toward basic residues; that stretch reads VRRRRLSSHKDH. The tract at residues 232-251 is disordered; sequence VRRRRLSSHKDHRPSSASMT.

This sequence belongs to the YggT family.

It is found in the plastid. It localises to the chloroplast thylakoid membrane. Not required for the biogenesis and accumulation of native cytochrome b6 in the thylakoid membrane. Not functionally involved in the pathway for covalent binding of the c-type heme to cytochrome b6. The sequence is that of YlmG homolog protein 2, chloroplastic from Arabidopsis thaliana (Mouse-ear cress).